Reading from the N-terminus, the 393-residue chain is Phosphoglycerate kinase (393 aa).

Substrate contacts are provided by residues 22–24, Arg-37, 60–63, Arg-119, and Arg-152; these read DFN and HLGR. ATP is bound by residues Lys-202, Gly-293, Glu-324, and 350–353; that span reads GGDS.

The protein belongs to the phosphoglycerate kinase family. As to quaternary structure, monomer.

The protein resides in the cytoplasm. The enzyme catalyses (2R)-3-phosphoglycerate + ATP = (2R)-3-phospho-glyceroyl phosphate + ADP. The protein operates within carbohydrate degradation; glycolysis; pyruvate from D-glyceraldehyde 3-phosphate: step 2/5. The polypeptide is Phosphoglycerate kinase (pgk) (Borreliella burgdorferi (strain ATCC 35210 / DSM 4680 / CIP 102532 / B31) (Borrelia burgdorferi)).